A 337-amino-acid polypeptide reads, in one-letter code: Dolichyl-phosphate beta-glucosyltransferase ALG5C (337 aa).

Residues 1 to 6 are Lumenal-facing; it reads MNDLPP. Residues 7-27 traverse the membrane as a helical segment; that stretch reads IANLISNILFVLLIITFLYAL. Topologically, residues 28-337 are cytoplasmic; sequence CSRFVSDKTL…ADTPISDFEV (310 aa).

This sequence belongs to the glycosyltransferase 2 family.

The protein localises to the endoplasmic reticulum membrane. The enzyme catalyses a di-trans,poly-cis-dolichyl phosphate + UDP-alpha-D-glucose = a di-trans,poly-cis-dolichyl beta-D-glucosyl phosphate + UDP. It functions in the pathway protein modification; protein glycosylation. Its function is as follows. Dolichyl-phosphate beta-glucosyltransferase involved in the glycosylation of glycoproteins through the synthesis of dolichyl beta-D-glucosyl phosphate which serves as a sugar donor for transfer of three glucose residues to the Man-9-GlcNAc-2-PP-dolichol precursor to N-glycans. The polypeptide is Dolichyl-phosphate beta-glucosyltransferase ALG5C (Trichomonas vaginalis (strain ATCC PRA-98 / G3)).